Here is a 35-residue protein sequence, read N- to C-terminus: Thionin NsW1 (35 aa).

Cystine bridges form between cysteine 4–cysteine 32, cysteine 12–cysteine 30, and cysteine 16–cysteine 26.

Contains 4 disulfide bonds.

The protein resides in the secreted. Functionally, antimicrobial peptide disrupting membranes. Has antibacterial against Gram-positive bacteria S.aureus (MIC=6.5 uM) and B.subtilis (MIC=3.25 uM) but not against Gram-negative bacterium E.coli. Has antifungal activity against C.albicans (MIC=1.63 uM). This Nigella sativa (Black cumin) protein is Thionin NsW1.